Reading from the N-terminus, the 330-residue chain is Protein qutG (330 aa).

Positions 78, 100, 102, 103, and 251 each coordinate Mg(2+). Glu-78 contributes to the substrate binding site. Substrate contacts are provided by residues 102 to 105 (LDGT) and Asp-251.

This sequence belongs to the inositol monophosphatase superfamily.

Its function is as follows. Not known. Probably involved in quinate metabolism. In Emericella nidulans (strain FGSC A4 / ATCC 38163 / CBS 112.46 / NRRL 194 / M139) (Aspergillus nidulans), this protein is Protein qutG (qutG).